The following is a 296-amino-acid chain: Nucleotide-binding protein MGAS2096_Spy0550 (296 aa).

13–20 (GMSGAGKT) lines the ATP pocket. 63–66 (DMRS) serves as a coordination point for GTP.

This sequence belongs to the RapZ-like family.

In terms of biological role, displays ATPase and GTPase activities. This chain is Nucleotide-binding protein MGAS2096_Spy0550, found in Streptococcus pyogenes serotype M12 (strain MGAS2096).